A 674-amino-acid polypeptide reads, in one-letter code: DNA ligase (674 aa).

Residues 34 to 38 (DFEFD), 83 to 84 (SL), and glutamate 117 each bind NAD(+). The N6-AMP-lysine intermediate role is filled by lysine 119. Arginine 140, glutamate 184, lysine 297, and lysine 321 together coordinate NAD(+). Residues cysteine 415, cysteine 418, cysteine 433, and cysteine 439 each contribute to the Zn(2+) site. A BRCT domain is found at 598–674 (LVNTNFEGQS…IDEDEFERML (77 aa)).

Belongs to the NAD-dependent DNA ligase family. LigA subfamily. It depends on Mg(2+) as a cofactor. The cofactor is Mn(2+).

It carries out the reaction NAD(+) + (deoxyribonucleotide)n-3'-hydroxyl + 5'-phospho-(deoxyribonucleotide)m = (deoxyribonucleotide)n+m + AMP + beta-nicotinamide D-nucleotide.. In terms of biological role, DNA ligase that catalyzes the formation of phosphodiester linkages between 5'-phosphoryl and 3'-hydroxyl groups in double-stranded DNA using NAD as a coenzyme and as the energy source for the reaction. It is essential for DNA replication and repair of damaged DNA. In Chlorobaculum parvum (strain DSM 263 / NCIMB 8327) (Chlorobium vibrioforme subsp. thiosulfatophilum), this protein is DNA ligase.